The chain runs to 126 residues: Glycerol dehydrogenase small subunit (126 aa).

The next 4 membrane-spanning stretches (helical) occupy residues 13–33 (WLTL…VIGG), 41–61 (GSTY…FMLM), 67–87 (AFLY…EVGF), and 92–112 (LLPR…TIPV).

Its subcellular location is the cell membrane. The catalysed reaction is glycerol + A = dihydroxyacetone + AH2. Functionally, catalyzes the oxidation of glycerol to glycerone. Also acts, more slowly, on a number of other polyols including D-sorbitol, D-arabinitol, D-mannitol, meso-erythritol, adonitol and propylene glycol. The protein is Glycerol dehydrogenase small subunit (sldB) of Gluconobacter thailandicus.